Reading from the N-terminus, the 184-residue chain is MRYEYVPLKDQYEKEIVPALMKEFNYKNIHQVPKLVKIVINMGIGEGSRNYDLIERHANELAKITGQKPIVTRARKSISNFKIRKGMPIGLKVTLRGARMYNFLYKLINIVLPKVRDFRGLDPNSFDGRGNYSFGLSEQLVFPELNPDEVRRIQGMDITIVTTAKTDQEARRLLELFGMPFKRG.

Belongs to the universal ribosomal protein uL5 family. Part of the 50S ribosomal subunit; part of the 5S rRNA/L5/L18/L25 subcomplex. Contacts the 5S rRNA and the P site tRNA. Forms a bridge to the 30S subunit in the 70S ribosome.

Functionally, this is one of the proteins that bind and probably mediate the attachment of the 5S RNA into the large ribosomal subunit, where it forms part of the central protuberance. In the 70S ribosome it contacts protein S13 of the 30S subunit (bridge B1b), connecting the 2 subunits; this bridge is implicated in subunit movement. Contacts the P site tRNA; the 5S rRNA and some of its associated proteins might help stabilize positioning of ribosome-bound tRNAs. In Thermotoga maritima (strain ATCC 43589 / DSM 3109 / JCM 10099 / NBRC 100826 / MSB8), this protein is Large ribosomal subunit protein uL5.